Consider the following 223-residue polypeptide: Receptor-transporting protein 2 (223 aa).

The Cytoplasmic segment spans residues methionine 1–serine 193. The 3CxxC-type zinc-finger motif lies at alanine 52 to glycine 161. A helical transmembrane segment spans residues phenylalanine 194–phenylalanine 216. Residues arginine 217–leucine 223 lie on the Extracellular side of the membrane.

The protein belongs to the TMEM7 family. Interacts with olfactory receptors. As to expression, predominantly expressed in olfactory and vomeronasal organs, in mature olfactory sensory neurons.

The protein resides in the cell membrane. Functionally, specifically promotes functional cell surface expression of olfactory receptors, but not of other GPCRs. The sequence is that of Receptor-transporting protein 2 (Rtp2) from Mus musculus (Mouse).